A 371-amino-acid polypeptide reads, in one-letter code: Poly(rC)-binding protein 3 (371 aa).

3 consecutive KH domains span residues 45–95 (TLTI…TITG), 129–182 (PVTL…TISG), and 293–357 (ASTH…QYLI).

It is found in the cytoplasm. Functionally, single-stranded nucleic acid binding protein that binds preferentially to oligo dC. The sequence is that of Poly(rC)-binding protein 3 from Homo sapiens (Human).